The sequence spans 301 residues: uncharacterized protein (301 aa).

Residues Ser-44 and Tyr-107 each act as charge relay system in the active site. The active-site Proton donor is Tyr-133. The Schiff-base intermediate with substrate role is filled by Lys-162.

This sequence belongs to the DapA family. Homotetramer.

The protein localises to the cytoplasm. This is an uncharacterized protein from Pyrobaculum aerophilum (strain ATCC 51768 / DSM 7523 / JCM 9630 / CIP 104966 / NBRC 100827 / IM2).